The chain runs to 488 residues: Glutamyl-tRNA(Gln) amidotransferase subunit A (488 aa).

Residues Lys79 and Ser159 each act as charge relay system in the active site. Catalysis depends on Ser183, which acts as the Acyl-ester intermediate.

Belongs to the amidase family. GatA subfamily. Heterotrimer of A, B and C subunits.

The enzyme catalyses L-glutamyl-tRNA(Gln) + L-glutamine + ATP + H2O = L-glutaminyl-tRNA(Gln) + L-glutamate + ADP + phosphate + H(+). Allows the formation of correctly charged Gln-tRNA(Gln) through the transamidation of misacylated Glu-tRNA(Gln) in organisms which lack glutaminyl-tRNA synthetase. The reaction takes place in the presence of glutamine and ATP through an activated gamma-phospho-Glu-tRNA(Gln). This is Glutamyl-tRNA(Gln) amidotransferase subunit A from Wolbachia pipientis subsp. Culex pipiens (strain wPip).